A 52-amino-acid polypeptide reads, in one-letter code: uncharacterized protein (52 aa).

A coiled-coil region spans residues 3-46 (KIQLESSNQSVLKLEERRLNLTAEIERIYGQMDLKRKELENANL).

This is an uncharacterized protein from Dictyostelium discoideum (Social amoeba).